The following is a 571-amino-acid chain: Proline--tRNA ligase (571 aa).

Belongs to the class-II aminoacyl-tRNA synthetase family. ProS type 1 subfamily. As to quaternary structure, homodimer.

It localises to the cytoplasm. It catalyses the reaction tRNA(Pro) + L-proline + ATP = L-prolyl-tRNA(Pro) + AMP + diphosphate. Catalyzes the attachment of proline to tRNA(Pro) in a two-step reaction: proline is first activated by ATP to form Pro-AMP and then transferred to the acceptor end of tRNA(Pro). As ProRS can inadvertently accommodate and process non-cognate amino acids such as alanine and cysteine, to avoid such errors it has two additional distinct editing activities against alanine. One activity is designated as 'pretransfer' editing and involves the tRNA(Pro)-independent hydrolysis of activated Ala-AMP. The other activity is designated 'posttransfer' editing and involves deacylation of mischarged Ala-tRNA(Pro). The misacylated Cys-tRNA(Pro) is not edited by ProRS. The chain is Proline--tRNA ligase from Pediococcus pentosaceus (strain ATCC 25745 / CCUG 21536 / LMG 10740 / 183-1w).